Reading from the N-terminus, the 505-residue chain is 4-trimethylaminobutyraldehyde dehydrogenase (505 aa).

NAD(+)-binding positions include K191 and 243 to 247 (GSVPT). The active-site Proton acceptor is E265. C299 acts as the Nucleophile in catalysis. E402 contributes to the NAD(+) binding site.

It belongs to the aldehyde dehydrogenase family. In terms of assembly, homotetramer. As to expression, constitutively expressed in all organs tested: brain, eye, gill, GI, heart, liver, kidney, muscle, skin, testis and ovary.

It localises to the cytoplasm. The protein localises to the cytosol. The enzyme catalyses 4-(trimethylamino)butanal + NAD(+) + H2O = 4-(trimethylamino)butanoate + NADH + 2 H(+). It catalyses the reaction an aldehyde + NAD(+) + H2O = a carboxylate + NADH + 2 H(+). It functions in the pathway amine and polyamine biosynthesis; carnitine biosynthesis. In terms of biological role, converts gamma-trimethylaminobutyraldehyde into gamma-butyrobetaine with high efficiency (in vitro). Can catalyze the irreversible oxidation of a broad range of aldehydes to the corresponding acids in an NAD-dependent reaction, but with low efficiency. This chain is 4-trimethylaminobutyraldehyde dehydrogenase (aldh9A1), found in Oryzias latipes (Japanese rice fish).